An 87-amino-acid chain; its full sequence is Phosphoribosyl-ATP pyrophosphatase (87 aa).

It belongs to the PRA-PH family.

The protein localises to the cytoplasm. It carries out the reaction 1-(5-phospho-beta-D-ribosyl)-ATP + H2O = 1-(5-phospho-beta-D-ribosyl)-5'-AMP + diphosphate + H(+). Its pathway is amino-acid biosynthesis; L-histidine biosynthesis; L-histidine from 5-phospho-alpha-D-ribose 1-diphosphate: step 2/9. This chain is Phosphoribosyl-ATP pyrophosphatase, found in Arthrobacter sp. (strain FB24).